Reading from the N-terminus, the 321-residue chain is PIH1 domain-containing protein 2 (321 aa).

Belongs to the PIH1 family.

In Xenopus tropicalis (Western clawed frog), this protein is PIH1 domain-containing protein 2 (pih1d2).